Here is a 152-residue protein sequence, read N- to C-terminus: MFRGTSAITLDSKNRITIPTKYREELFADCQGKMVCTVDIQHPCLLLYPLPEWEEIELKLCNLSSMNPQERLLQQVILGNASDCEMDKNGRLLINGPLRQHASLEKNVMLVGQLKKFEIWHDTAWQSQMLQGISKIQSGEIELTERLLDLSL.

2 consecutive SpoVT-AbrB domains span residues 5 to 52 (TSAI…PLPE) and 81 to 124 (ASDC…HDTA).

The protein belongs to the MraZ family. As to quaternary structure, forms oligomers.

Its subcellular location is the cytoplasm. It is found in the nucleoid. In Colwellia psychrerythraea (strain 34H / ATCC BAA-681) (Vibrio psychroerythus), this protein is Transcriptional regulator MraZ.